The chain runs to 1201 residues: Zinc finger protein sdc-1 (1201 aa).

7 C2H2-type zinc fingers span residues 117–139 (LTCA…RGVH), 145–168 (YMCQ…RTSC), 233–254 (SSCH…GNVH), 268–290 (YFCH…WRLH), 486–513 (IVCH…LLRH), 521–543 (YHCA…INDC), and 652–674 (VVCF…DYCH). Residues 1164 to 1201 (KRRNSETREHELIELDTDDLNEPSTSDGRYSFGHHGYR) are disordered. Positions 1167-1176 (NSETREHELI) are enriched in basic and acidic residues.

Component of the SDC complex, which consists of sdc-1, sdc-2 and sdc-3. Within the complex, interacts with sdc-2 and sdc-3.

The protein resides in the nucleus. It is found in the chromosome. In terms of biological role, embryonic transcription factor regulating downstream genes involved specifically in the sex determination and dosage compensation pathways, or regulating other genes involved in the coordinate control of both processes. Component of the SDC complex that functions in sex determination and in X chromosome dosage compensation specifically in hermaphrodite (XX) animals. Involved in the recruitment of the condensin I-like dosage compensation complex to the male sex-determining autosomal gene her-1, thereby contributing to its repression and initiating hermaphrodite sexual development. Similarly, might contribute to X-linked gene repression through recruitment of the dosage compensation complex to the X chromosomes in hermaphrodites. Seems to be involved in the depletion of histone H4 lysine 16 acetylation (H4K16ac) on dosage compensated X chromosomes. Plays a role in developmental rate and body fat regulation downstream of the TOR complex 2 pathway. This Caenorhabditis elegans protein is Zinc finger protein sdc-1 (sdc-1).